The sequence spans 143 residues: MSRHYEVVFLVHPDQSEQVPAMIERYKSLIEGGNGTIHRLEDWGRRQLAYPIQNLVKAHYVLLNIEVDQAVLSELVESFRFNDAVLRHLVVKRDGADTEQSLIMKSKDEKGDKPERSERRRRDDEEGEAPAANDNDGDNAEAA.

The tract at residues threonine 98–alanine 143 is disordered. Residues lysine 105 to aspartate 124 show a composition bias toward basic and acidic residues.

Belongs to the bacterial ribosomal protein bS6 family.

Binds together with bS18 to 16S ribosomal RNA. The sequence is that of Small ribosomal subunit protein bS6 from Xanthomonas euvesicatoria pv. vesicatoria (strain 85-10) (Xanthomonas campestris pv. vesicatoria).